The primary structure comprises 215 residues: Probable transaldolase (215 aa).

Lys83 acts as the Schiff-base intermediate with substrate in catalysis.

Belongs to the transaldolase family. Type 3B subfamily.

The protein resides in the cytoplasm. The enzyme catalyses D-sedoheptulose 7-phosphate + D-glyceraldehyde 3-phosphate = D-erythrose 4-phosphate + beta-D-fructose 6-phosphate. The protein operates within carbohydrate degradation; pentose phosphate pathway; D-glyceraldehyde 3-phosphate and beta-D-fructose 6-phosphate from D-ribose 5-phosphate and D-xylulose 5-phosphate (non-oxidative stage): step 2/3. Its function is as follows. Transaldolase is important for the balance of metabolites in the pentose-phosphate pathway. The chain is Probable transaldolase from Clostridium perfringens (strain ATCC 13124 / DSM 756 / JCM 1290 / NCIMB 6125 / NCTC 8237 / Type A).